A 996-amino-acid polypeptide reads, in one-letter code: Leucine-rich repeat receptor-like kinase protein THICK TASSEL DWARF1 (996 aa).

The signal sequence occupies residues 1 to 26 (MPPPTFLLGLLLLLLLAAAAPAPASA). 21 LRR repeats span residues 78–103 (TSRV…VALL), 104–127 (DALA…LASM), 128–151 (PALR…PPAA), 153–178 (FPAL…APHA), 180–201 (SLRY…TFGD), 202–226 (LAAL…LSRL), 251–275 (LQSL…LARL), 276–299 (SRLD…LGAL), 300–323 (TSLR…FAAL), 325–349 (NLKL…DFPF), 351–371 (EVLQ…LGRN), 372–395 (GRLK…LCAG), 397–419 (NLQL…LGDC), 420–443 (KTLT…LFDL), 445–466 (QANM…VIAG), 467–490 (DKIG…IGNL), 491–514 (PALQ…IGRL), 516–538 (NLTR…LMGC), 539–562 (ASLG…VTSL), 563–586 (KILC…MANM), and 587–611 (TSLT…QFLV). The helical transmembrane segment at 646–666 (KKLLVWLVVLLTLLVLAVLGA) threads the bilayer. The Protein kinase domain occupies 703-978 (LKEDNIIGKG…TMREVVHMLS (276 aa)). Residues 709–717 (IGKGGAGIV) and Lys-731 contribute to the ATP site. Asp-828 acts as the Proton acceptor in catalysis.

The protein belongs to the protein kinase superfamily. Ser/Thr protein kinase family. As to expression, highly expressed in the apex of the vegetative seedlings. Lower expression in young leaves, ears and tassels, embryos and roots. Not expressed in the shoot meristem itself. Detected in the three outermost layers of the inflorescence meristem, and on its flanks at positions of prospective spikelet pair meristems. Not confined to meristematic cells but also detected in primordia of glumes, lemmas and stamens.

Its subcellular location is the membrane. It carries out the reaction L-seryl-[protein] + ATP = O-phospho-L-seryl-[protein] + ADP + H(+). The catalysed reaction is L-threonyl-[protein] + ATP = O-phospho-L-threonyl-[protein] + ADP + H(+). Its function is as follows. Receptor-like kinase protein that regulates meristem size during inflorescence and flower development. Promotes vegetative meristem growth and restricts inflorescence and floral meristem growth. Based on additive and synergistic phenotypes of double mutants, it is probable that unlike CLV1 and CLV2 in A.thaliana, TD1 and FAE2 do not function exclusively in a single pathway. However, KN-1 and TD1 do function in a linear pathway to maintain vegetative meristem homeostasis, but they may interact with different partners during development. The chain is Leucine-rich repeat receptor-like kinase protein THICK TASSEL DWARF1 (TD1) from Zea mays (Maize).